Here is a 91-residue protein sequence, read N- to C-terminus: Small ribosomal subunit protein uS15 (91 aa).

The protein belongs to the universal ribosomal protein uS15 family. In terms of assembly, part of the 30S ribosomal subunit. Forms a bridge to the 50S subunit in the 70S ribosome, contacting the 23S rRNA.

Functionally, one of the primary rRNA binding proteins, it binds directly to 16S rRNA where it helps nucleate assembly of the platform of the 30S subunit by binding and bridging several RNA helices of the 16S rRNA. In terms of biological role, forms an intersubunit bridge (bridge B4) with the 23S rRNA of the 50S subunit in the ribosome. This chain is Small ribosomal subunit protein uS15, found in Nautilia profundicola (strain ATCC BAA-1463 / DSM 18972 / AmH).